We begin with the raw amino-acid sequence, 345 residues long: MKVAIIGATGYGGIELIRLLEQHPYFSIASLHSFSQVGECITNVYPHFQNVLVHTLQEIDVEEIEKEAEIVFLATPAGVSAELTPKLLAVGLKVIDLSGDFRMKDPFIYEQWYKRAAAKEGVLREAVYGLSEWKRSEIQKANLIANPGCFATAALLAILPLVRSGIIEEDSIIIDAKSGVSGAGKTPTTMTHFPELYDNLRIYKVNEHQHIPEIEQMLAEWNRETKPITFSTHLIPISRGIMVTLYAKVKREMEIEQLQQLYEEAYEQSAFIRIRMQGEFPSPKEVRGSNYCDMGIAYDERTGRVTIVSVIDNMMKGAAGQAIQNANIVAGLEETTGLQHMPLYL.

The active site involves cysteine 149.

It belongs to the NAGSA dehydrogenase family. Type 1 subfamily.

It localises to the cytoplasm. The enzyme catalyses N-acetyl-L-glutamate 5-semialdehyde + phosphate + NADP(+) = N-acetyl-L-glutamyl 5-phosphate + NADPH + H(+). Its pathway is amino-acid biosynthesis; L-arginine biosynthesis; N(2)-acetyl-L-ornithine from L-glutamate: step 3/4. Functionally, catalyzes the NADPH-dependent reduction of N-acetyl-5-glutamyl phosphate to yield N-acetyl-L-glutamate 5-semialdehyde. The sequence is that of N-acetyl-gamma-glutamyl-phosphate reductase from Bacillus anthracis.